The following is a 181-amino-acid chain: MSELKQAAAPEQALVVGRITSVYGVKGWVKLYSHTEPMQGIFDYKHWWLKTPSGWKTVELSQGRLQGRGLVASVKGYTDRDQVKDICGMDVYIDAAELPELEEGDYYWSQLEGLRVITKEGVLLGKVSQLMETGANDVIVVRACEGSFDREERLIPYAPGTYVLNIDLEQQEMVVDWDPEF.

In terms of domain architecture, PRC barrel spans 103–181; the sequence is EGDYYWSQLE…EMVVDWDPEF (79 aa).

Belongs to the RimM family. As to quaternary structure, binds ribosomal protein uS19.

The protein localises to the cytoplasm. Its function is as follows. An accessory protein needed during the final step in the assembly of 30S ribosomal subunit, possibly for assembly of the head region. Essential for efficient processing of 16S rRNA. May be needed both before and after RbfA during the maturation of 16S rRNA. It has affinity for free ribosomal 30S subunits but not for 70S ribosomes. The sequence is that of Ribosome maturation factor RimM from Marinomonas sp. (strain MWYL1).